A 1356-amino-acid polypeptide reads, in one-letter code: Fibronectin type III domain containing protein 3C1 (1356 aa).

3 disordered regions span residues 303–341 (PRNM…SDNN), 356–402 (TYDE…SDVA), and 428–452 (NQKK…QPGC). Positions 308–341 (DNIPDTNTTDTITSSSAHTPSISTSNATFCSDNN) are enriched in low complexity. Residues 370 to 393 (PSCTSQSASNPSVSENAHNPSSIN) are compositionally biased toward polar residues. The segment covering 439–448 (LKEHNTEDRT) has biased composition (basic and acidic residues). Fibronectin type-III domains lie at 454-549 (NIEK…TPGC), 553-648 (PPLA…TPPA), 650-741 (LPPK…TRPA), and 745-842 (CPNK…TLPP). A compositionally biased stretch (polar residues) spans 825–838 (GQSRPSDVLTIQTP). Positions 825 to 894 (GQSRPSDVLT…QDRKVHPSSE (70 aa)) are disordered. Basic and acidic residues predominate over residues 883 to 894 (PHQDRKVHPSSE). 4 Fibronectin type-III domains span residues 914-1007 (PPSQ…TPGT), 1017-1103 (EVES…TKPL), 1104-1199 (PPEP…TKSP), and 1202-1299 (ALKA…TYKH). Residues 1299–1320 (HHSGHGKGSGSKGKGNHNDKGE) form a disordered region. Residues 1330–1350 (TFVLTLLIGFALIAVLCAVAV) traverse the membrane as a helical segment. The Cytoplasmic segment spans residues 1351 to 1356 (QYLLIN).

The protein belongs to the FNDC3 family.

The protein resides in the membrane. This is Fibronectin type III domain containing protein 3C1 (Fndc3c1) from Mus musculus (Mouse).